A 99-amino-acid chain; its full sequence is Pterin-4-alpha-carbinolamine dehydratase (99 aa).

This sequence belongs to the pterin-4-alpha-carbinolamine dehydratase family.

It catalyses the reaction (4aS,6R)-4a-hydroxy-L-erythro-5,6,7,8-tetrahydrobiopterin = (6R)-L-erythro-6,7-dihydrobiopterin + H2O. Involved in tetrahydrobiopterin biosynthesis. The protein is Pterin-4-alpha-carbinolamine dehydratase (pcbd) of Dictyostelium discoideum (Social amoeba).